The primary structure comprises 815 residues: Probable disease resistance protein At5g66910 (815 aa).

One can recognise an RPW8 domain in the interval 1–150 (MVVVDWLGLG…NINKKLDRLS (150 aa)). NB-ARC domains are found at residues 156–283 (PLVS…DVWQ) and 341–440 (SPDE…DIWM). 196 to 203 (GPPGCGKT) contributes to the ATP binding site. 4 LRR repeats span residues 656–678 (NLQE…IPEV), 680–702 (SLKT…IGNL), 704–726 (RLEV…TERL), and 728–750 (NLRS…IGKL).

This sequence belongs to the disease resistance NB-LRR family.

Probable disease resistance protein. The polypeptide is Probable disease resistance protein At5g66910 (Arabidopsis thaliana (Mouse-ear cress)).